The following is a 167-amino-acid chain: MLAVALLVLLCASASANSIQSRTSSYSGEYGGKGGKRFSHSGNQLDGPITAFRIRVNRYYIVGLQVRYGTVWSDYVGGTQGDLEEIFLHPGESVIQVSGKYKSYVKQMIFVTDKGRYLPFGKASGTSFNAVPLHPNTVLRFISGRSGSAIDSISLHWDTYPSHCNTC.

The N-terminal stretch at 1–16 (MLAVALLVLLCASASA) is a signal peptide. Residues 24-159 (SSYSGEYGGK…IDSISLHWDT (136 aa)) enclose the Jacalin-type lectin domain.

Belongs to the jacalin lectin family.

The protein resides in the secreted. It localises to the extracellular space. The protein localises to the extracellular matrix. Its subcellular location is the zymogen granule lumen. It is found in the golgi apparatus lumen. Functionally, may play a role in protein trafficking. May act as a linker molecule between the submembranous matrix on the luminal side of zymogen granule membrane (ZGM) and aggregated secretory proteins during granule formation in the TGN. In Mus musculus (Mouse), this protein is Zymogen granule membrane protein 16 (Zg16).